The sequence spans 100 residues: ESAT-6-like protein EsxT (100 aa).

This sequence belongs to the WXG100 family. ESAT-6 subfamily. Forms a tight 1:1 complex with EsxU.

It localises to the secreted. The protein is ESAT-6-like protein EsxT of Mycobacterium tuberculosis (strain CDC 1551 / Oshkosh).